The sequence spans 340 residues: UDP-N-acetylenolpyruvoylglucosamine reductase (340 aa).

An FAD-binding PCMH-type domain is found at His14–Leu185. The active site involves Arg162. The Proton donor role is filled by Ser235. Glu332 is a catalytic residue.

The protein belongs to the MurB family. It depends on FAD as a cofactor.

Its subcellular location is the cytoplasm. The enzyme catalyses UDP-N-acetyl-alpha-D-muramate + NADP(+) = UDP-N-acetyl-3-O-(1-carboxyvinyl)-alpha-D-glucosamine + NADPH + H(+). It functions in the pathway cell wall biogenesis; peptidoglycan biosynthesis. Functionally, cell wall formation. This chain is UDP-N-acetylenolpyruvoylglucosamine reductase, found in Xanthomonas oryzae pv. oryzae (strain KACC10331 / KXO85).